The chain runs to 713 residues: Ribosomal RNA large subunit methyltransferase K/L (713 aa).

Positions 43-154 (LAYRITLWTR…NGVITIAMNF (112 aa)) constitute a THUMP domain.

Belongs to the methyltransferase superfamily. RlmKL family.

It is found in the cytoplasm. It carries out the reaction guanosine(2445) in 23S rRNA + S-adenosyl-L-methionine = N(2)-methylguanosine(2445) in 23S rRNA + S-adenosyl-L-homocysteine + H(+). It catalyses the reaction guanosine(2069) in 23S rRNA + S-adenosyl-L-methionine = N(2)-methylguanosine(2069) in 23S rRNA + S-adenosyl-L-homocysteine + H(+). Its function is as follows. Specifically methylates the guanine in position 2445 (m2G2445) and the guanine in position 2069 (m7G2069) of 23S rRNA. This Shewanella sp. (strain ANA-3) protein is Ribosomal RNA large subunit methyltransferase K/L.